Consider the following 597-residue polypeptide: Blastula protease 10 (597 aa).

The N-terminal stretch at 1-16 is a signal peptide; the sequence is MKLILFLSGLVSLVLC. Residues 17-93 constitute a propeptide, activation peptide; that stretch reads TLAAPTGDQK…DEMTGRKKRK (77 aa). The segment at 24 to 67 is disordered; the sequence is DQKEIHTETPPPKKPSETTTPGALKTPQPEPKDEEPTPGAFQGD. The Peptidase M12A domain occupies 93-294; sequence KATIYESQRW…ELANLIYECD (202 aa). 9 disulfide bridges follow: C134/C293, C162/C182, C299/C315, C305/C317, C319/C328, C339/C365, C392/C412, C484/C510, and C537/C557. Residue H190 participates in Zn(2+) binding. E191 is a catalytic residue. Positions 194 and 200 each coordinate Zn(2+). One can recognise an EGF-like domain in the interval 295 to 329; the sequence is DIEDCAGANECLNGGYHDTECNCVCPSGYNGDLCE. 2 consecutive CUB domains span residues 339–449 and 484–595; these read CSER…YRIV and CGGS…YRAI.

It depends on Zn(2+) as a cofactor.

It is found in the cytoplasm. It localises to the perinuclear region. Its subcellular location is the cell cortex. The protein localises to the secreted. The protein resides in the extracellular space. Could be involved in the differentiation of ectodermal lineages and subsequent patterning of the embryo. The sequence is that of Blastula protease 10 (BP10) from Paracentrotus lividus (Common sea urchin).